The primary structure comprises 208 residues: Putative ribosomal protein uS2-like (208 aa).

This sequence belongs to the universal ribosomal protein uS2 family.

The protein resides in the plastid. It is found in the chloroplast. The protein is Putative ribosomal protein uS2-like (rps2-2) of Chlamydomonas reinhardtii (Chlamydomonas smithii).